The following is a 264-amino-acid chain: Vacuolar protein sorting-associated protein 75 (264 aa).

Ser3 carries the phosphoserine modification. Positions Leu223–Val264 are disordered.

It belongs to the nucleosome assembly protein (NAP) family. As to quaternary structure, homodimer. Homotetramer. Forms a complex with RTT109; consisting of a VPS75 dimer contacted by two RTT109 subunits. Interacts with RTT109; the interaction is direct. Interacts with ASF1. Interacts with histone H3/H4 heterodimers and heterotetramers via histone H3.

It is found in the nucleus. Functionally, histone chaperone which acts as a cofactor stimulating histone H3 acetylation by RTT109. Preferentially stimulates histone H3 'Lys-9' acetylation by RTT109. May also stimulate histone H3 'Lys-56' acetylation by RTT109. Assembles nucleosomes (in vitro). The polypeptide is Vacuolar protein sorting-associated protein 75 (VPS75) (Saccharomyces cerevisiae (strain ATCC 204508 / S288c) (Baker's yeast)).